The primary structure comprises 276 residues: Dermonecrotic toxin LsaSicTox-alphaIB2i (276 aa).

His5 is an active-site residue. Positions 25 and 27 each coordinate Mg(2+). The active-site Nucleophile is His41. Disulfide bonds link Cys45–Cys51 and Cys47–Cys190. Asp85 provides a ligand contact to Mg(2+). N-linked (GlcNAc...) asparagine glycosylation is found at Asn129 and Asn253.

It belongs to the arthropod phospholipase D family. Class II subfamily. The cofactor is Mg(2+). As to expression, expressed by the venom gland.

It localises to the secreted. It carries out the reaction an N-(acyl)-sphingosylphosphocholine = an N-(acyl)-sphingosyl-1,3-cyclic phosphate + choline. The enzyme catalyses an N-(acyl)-sphingosylphosphoethanolamine = an N-(acyl)-sphingosyl-1,3-cyclic phosphate + ethanolamine. The catalysed reaction is a 1-acyl-sn-glycero-3-phosphocholine = a 1-acyl-sn-glycero-2,3-cyclic phosphate + choline. It catalyses the reaction a 1-acyl-sn-glycero-3-phosphoethanolamine = a 1-acyl-sn-glycero-2,3-cyclic phosphate + ethanolamine. Its function is as follows. Dermonecrotic toxins cleave the phosphodiester linkage between the phosphate and headgroup of certain phospholipids (sphingolipid and lysolipid substrates), forming an alcohol (often choline) and a cyclic phosphate. This toxin acts on sphingomyelin (SM). It may also act on ceramide phosphoethanolamine (CPE), lysophosphatidylcholine (LPC) and lysophosphatidylethanolamine (LPE), but not on lysophosphatidylserine (LPS), and lysophosphatidylglycerol (LPG). It acts by transphosphatidylation, releasing exclusively cyclic phosphate products as second products. Induces dermonecrosis, hemolysis, increased vascular permeability, edema, inflammatory response, and platelet aggregation. In Loxosceles sabina (Tucson recluse spider), this protein is Dermonecrotic toxin LsaSicTox-alphaIB2i.